We begin with the raw amino-acid sequence, 302 residues long: UPF0761 membrane protein Tola_0461 (302 aa).

6 helical membrane-spanning segments follow: residues 51–71, 111–131, 150–170, 188–208, 222–242, and 256–276; these read YVSL…LSWL, TTSI…AAID, ITMY…SLLL, LGGG…ILLL, ALLG…GFGY, and ALAG…VVLL.

It belongs to the UPF0761 family.

The protein resides in the cell inner membrane. The polypeptide is UPF0761 membrane protein Tola_0461 (Tolumonas auensis (strain DSM 9187 / NBRC 110442 / TA 4)).